A 97-amino-acid polypeptide reads, in one-letter code: Co-chaperonin GroES (97 aa).

Belongs to the GroES chaperonin family. Heptamer of 7 subunits arranged in a ring. Interacts with the chaperonin GroEL.

It localises to the cytoplasm. In terms of biological role, together with the chaperonin GroEL, plays an essential role in assisting protein folding. The GroEL-GroES system forms a nano-cage that allows encapsulation of the non-native substrate proteins and provides a physical environment optimized to promote and accelerate protein folding. GroES binds to the apical surface of the GroEL ring, thereby capping the opening of the GroEL channel. The chain is Co-chaperonin GroES from Burkholderia cepacia (Pseudomonas cepacia).